The sequence spans 95 residues: MNPKHWGRAVWTIIFIVLSQAGLDGNIEACKRKLYTIVSTLPCPACRRHATIAIEDNNVMSSDDLNYIYYFFIRLFNNLASDPKYAIDVTKVNPL.

The Intravirion segment spans residues 1–8; the sequence is MNPKHWGR. The ERV/ALR sulfhydryl oxidase domain occupies 1–95; that stretch reads MNPKHWGRAV…AIDVTKVNPL (95 aa). Residues 9–25 traverse the membrane as a helical segment; it reads AVWTIIFIVLSQAGLDG. Over 26–95 the chain is Virion surface; the sequence is NIEACKRKLY…AIDVTKVNPL (70 aa). A disulfide bridge links cysteine 43 with cysteine 46.

It belongs to the orthopoxvirus OPG072 family. In terms of assembly, interacts with OPG128/A2.5; this interaction involves formation of a transient disulfide-bonded intermediate, allowing disulfide bond transfer. Requires FAD as cofactor.

Its subcellular location is the virion membrane. It is found in the host cytoplasm. The enzyme catalyses 2 R'C(R)SH + O2 = R'C(R)S-S(R)CR' + H2O2. FAD-dependent sulfhydryl oxidase that catalyzes disulfide bond formation. The complete pathway for formation of disulfide bonds in intracellular virion membrane proteins sequentially involves thiol-disulfide transfer between OPG072/E10, OPG128/A2.5 and OPG088/G4. The protein is Probable FAD-linked sulfhydryl oxidase OPG072 (OPG072) of Bos taurus (Bovine).